A 131-amino-acid chain; its full sequence is (R)-mandelonitrile lyase (131 aa).

The region spanning 42–104 (VTFEPGARTA…WHGAAPTTAM (63 aa)) is the Cupin type-2 domain. 5 residues coordinate Mn(2+): histidine 53, histidine 55, glutamine 59, histidine 94, and histidine 96.

It belongs to the cupin domain-containing hydroxynitrile lyase family. The cofactor is Mn(2+).

The enzyme catalyses (R)-mandelonitrile = benzaldehyde + hydrogen cyanide. Its function is as follows. Hydroxynitrile lyase which catalyzes mandelonitrile formation from benzaldehyde and hydrogen cyanide with high stereoselectivity in presence of manganese. This Granulicella tundricola (strain ATCC BAA-1859 / DSM 23138 / MP5ACTX9) protein is (R)-mandelonitrile lyase.